We begin with the raw amino-acid sequence, 488 residues long: Inosine-5'-monophosphate dehydrogenase (488 aa).

2 consecutive CBS domains span residues 95–153 (VISN…SIKI) and 157–216 (MTKD…AKDE). Residues Asp-250 and 300-302 (GIG) each bind NAD(+). Residues Gly-302 and Gly-304 each coordinate K(+). Residue Ser-305 coordinates IMP. Cys-307 lines the K(+) pocket. Catalysis depends on Cys-307, which acts as the Thioimidate intermediate. IMP contacts are provided by residues 340–342 (DGG), 363–364 (GS), and 387–391 (YRGMG). Catalysis depends on Arg-403, which acts as the Proton acceptor. Residue Glu-417 participates in IMP binding. The disordered stretch occupies residues 467-488 (AGLAESHPHNVQITKESPNYSF). Residues Glu-471, Ser-472, and His-473 each contribute to the K(+) site. The segment covering 475-488 (HNVQITKESPNYSF) has biased composition (polar residues).

Belongs to the IMPDH/GMPR family. In terms of assembly, homotetramer. K(+) is required as a cofactor.

It catalyses the reaction IMP + NAD(+) + H2O = XMP + NADH + H(+). Its pathway is purine metabolism; XMP biosynthesis via de novo pathway; XMP from IMP: step 1/1. Mycophenolic acid (MPA) is a non-competitive inhibitor that prevents formation of the closed enzyme conformation by binding to the same site as the amobile flap. In contrast, mizoribine monophosphate (MZP) is a competitive inhibitor that induces the closed conformation. MPA is a potent inhibitor of mammalian IMPDHs but a poor inhibitor of the bacterial enzymes. MZP is a more potent inhibitor of bacterial IMPDH. Catalyzes the conversion of inosine 5'-phosphate (IMP) to xanthosine 5'-phosphate (XMP), the first committed and rate-limiting step in the de novo synthesis of guanine nucleotides, and therefore plays an important role in the regulation of cell growth. The polypeptide is Inosine-5'-monophosphate dehydrogenase (Staphylococcus epidermidis (strain ATCC 35984 / DSM 28319 / BCRC 17069 / CCUG 31568 / BM 3577 / RP62A)).